A 169-amino-acid polypeptide reads, in one-letter code: S-ribosylhomocysteine lyase (169 aa).

Fe cation is bound by residues His54, His58, and Cys128.

This sequence belongs to the LuxS family. Homodimer. Fe cation serves as cofactor.

It carries out the reaction S-(5-deoxy-D-ribos-5-yl)-L-homocysteine = (S)-4,5-dihydroxypentane-2,3-dione + L-homocysteine. Functionally, involved in the synthesis of autoinducer 2 (AI-2) which is secreted by bacteria and is used to communicate both the cell density and the metabolic potential of the environment. The regulation of gene expression in response to changes in cell density is called quorum sensing. Catalyzes the transformation of S-ribosylhomocysteine (RHC) to homocysteine (HC) and 4,5-dihydroxy-2,3-pentadione (DPD). This is S-ribosylhomocysteine lyase from Shewanella amazonensis (strain ATCC BAA-1098 / SB2B).